A 256-amino-acid polypeptide reads, in one-letter code: Thiazole synthase (256 aa).

K95 functions as the Schiff-base intermediate with DXP in the catalytic mechanism. 1-deoxy-D-xylulose 5-phosphate-binding positions include G156, 182-183 (AG), and 204-205 (NT).

This sequence belongs to the ThiG family. As to quaternary structure, homotetramer. Forms heterodimers with either ThiH or ThiS.

The protein resides in the cytoplasm. The catalysed reaction is [ThiS sulfur-carrier protein]-C-terminal-Gly-aminoethanethioate + 2-iminoacetate + 1-deoxy-D-xylulose 5-phosphate = [ThiS sulfur-carrier protein]-C-terminal Gly-Gly + 2-[(2R,5Z)-2-carboxy-4-methylthiazol-5(2H)-ylidene]ethyl phosphate + 2 H2O + H(+). Its pathway is cofactor biosynthesis; thiamine diphosphate biosynthesis. Functionally, catalyzes the rearrangement of 1-deoxy-D-xylulose 5-phosphate (DXP) to produce the thiazole phosphate moiety of thiamine. Sulfur is provided by the thiocarboxylate moiety of the carrier protein ThiS. In vitro, sulfur can be provided by H(2)S. This chain is Thiazole synthase, found in Escherichia coli O157:H7.